The following is a 207-amino-acid chain: MADS-box protein AGL71 (207 aa).

Residues 1 to 61 enclose the MADS-box domain; the sequence is MVRGKIEIKK…GRLHEYSSSQ (61 aa). One can recognise a K-box domain in the interval 88–178; it reads LQELKMEIDR…LEEVNMHHSS (91 aa).

The protein localises to the nucleus. Its function is as follows. MADS-box transcription factor that acts with AGL42 and AGL72 in the control of flowering time. Promotes flowering at the shoot apical and axillary meristems. Seems to act through a gibberellin-dependent pathway. Interacts genetically with SOC1 and its expression is directly regulated by SOC1. This chain is MADS-box protein AGL71 (AGL71), found in Arabidopsis thaliana (Mouse-ear cress).